Here is a 238-residue protein sequence, read N- to C-terminus: TATA-box-binding protein (238 aa).

A disordered region spans residues 1–58 (MDLKLPPTNPTNPQQAKTFMKSIEEDEKNKAEDLDIIKKEDIDEPKQEDTTDGNGGGG). The span at 27–49 (EKNKAEDLDIIKKEDIDEPKQED) shows a compositional bias: basic and acidic residues. Repeat copies occupy residues 65–141 (LQNI…ARII) and 155–232 (IQNI…YPVL).

The protein belongs to the TBP family. In terms of assembly, belongs to the TFIID complex together with the TBP-associated factors (TAFs). Binds DNA as monomer.

The protein resides in the nucleus. Functionally, general transcription factor that functions at the core of the DNA-binding multiprotein factor TFIID. Binding of TFIID to the TATA box is the initial transcriptional step of the pre-initiation complex (PIC), playing a role in the activation of eukaryotic genes transcribed by RNA polymerase II. The chain is TATA-box-binding protein (TBP1) from Candida albicans (strain SC5314 / ATCC MYA-2876) (Yeast).